Here is a 634-residue protein sequence, read N- to C-terminus: GTP-binding protein 4 (634 aa).

An N-acetylalanine modification is found at alanine 2. Lysine 103 carries the N6-acetyllysine; alternate modification. Residue lysine 103 forms a Glycyl lysine isopeptide (Lys-Gly) (interchain with G-Cter in SUMO2); alternate linkage. Serine 122 bears the Phosphoserine mark. The OBG-type G domain maps to 169-340 (RTLLLCGYPN…VKTEACDRLL (172 aa)). GTP-binding positions include 175 to 182 (GYPNVGKS), 221 to 225 (DTPGI), and 289 to 292 (NKCD). Lysine 332 is covalently cross-linked (Glycyl lysine isopeptide (Lys-Gly) (interchain with G-Cter in SUMO2)). Phosphoserine occurs at positions 468, 470, and 472. A disordered region spans residues 495–517 (ILESKEKNTQGPRMPRTAKKVQR). Residue lysine 522 is modified to N6-acetyllysine. Positions 529–634 (VDMDDKDDAH…KRKAGKKDRR (106 aa)) are disordered. Lysine 534 participates in a covalent cross-link: Glycyl lysine isopeptide (Lys-Gly) (interchain with G-Cter in SUMO2). Basic residues predominate over residues 544–554 (RRSRSITRKRK). Serine 558 is modified (phosphoserine). Residues 560–572 (PPSSVARSGSCSR) show a composition bias toward polar residues. Basic and acidic residues predominate over residues 573-585 (TPRDVSGLRDVKM). The segment covering 586 to 604 (VKKAKTMMKNAQKKMNRLG) has biased composition (basic residues). Basic and acidic residues predominate over residues 605–618 (KKGEADRHVFDMKP). Over residues 619–634 (KHLLSGKRKAGKKDRR) the composition is skewed to basic residues.

Belongs to the TRAFAC class OBG-HflX-like GTPase superfamily. OBG GTPase family. NOG subfamily. In terms of assembly, associates with pre-60S ribosomal particles. Interacts with MINAS-60 (product of an alternative open reading frame of RBM10).

It is found in the nucleus. The protein resides in the nucleolus. In terms of biological role, involved in the biogenesis of the 60S ribosomal subunit. Acts as a TP53 repressor, preventing TP53 stabilization and cell cycle arrest. The chain is GTP-binding protein 4 from Homo sapiens (Human).